A 143-amino-acid chain; its full sequence is EKC/KEOPS complex subunit LAGE3 (143 aa).

Residues 1 to 57 (MRDADADAGGGADGGDGRGGHSCRGGVDTAAAPAGGAPPAHAPGPGRDAASAARGSR) are disordered. A compositionally biased stretch (low complexity) spans 30–55 (AAAPAGGAPPAHAPGPGRDAASAARG).

It belongs to the CTAG/PCC1 family. Component of the EKC/KEOPS complex composed of at least GON7, TP53RK, TPRKB, OSGEP and LAGE3; the whole complex dimerizes. As to expression, ubiquitous.

The protein localises to the cytoplasm. Its subcellular location is the nucleus. Functionally, component of the EKC/KEOPS complex that is required for the formation of a threonylcarbamoyl group on adenosine at position 37 (t(6)A37) in tRNAs that read codons beginning with adenine. The complex is probably involved in the transfer of the threonylcarbamoyl moiety of threonylcarbamoyl-AMP (TC-AMP) to the N6 group of A37. LAGE3 functions as a dimerization module for the complex. The sequence is that of EKC/KEOPS complex subunit LAGE3 from Homo sapiens (Human).